The primary structure comprises 311 residues: tRNA dimethylallyltransferase (311 aa).

Position 11–18 (11–18) interacts with ATP; that stretch reads GPTASGKS. Residue 13–18 participates in substrate binding; that stretch reads TASGKS. Interaction with substrate tRNA stretches follow at residues 36–39 and 160–164; these read DSMQ and QRLIR.

It belongs to the IPP transferase family. As to quaternary structure, monomer. Mg(2+) is required as a cofactor.

The catalysed reaction is adenosine(37) in tRNA + dimethylallyl diphosphate = N(6)-dimethylallyladenosine(37) in tRNA + diphosphate. In terms of biological role, catalyzes the transfer of a dimethylallyl group onto the adenine at position 37 in tRNAs that read codons beginning with uridine, leading to the formation of N6-(dimethylallyl)adenosine (i(6)A). This Rickettsia prowazekii (strain Madrid E) protein is tRNA dimethylallyltransferase.